The following is a 386-amino-acid chain: Zinc transporter 7-A (386 aa).

The Cytoplasmic portion of the chain corresponds to 1-37 (MLPLSIKDDEYKPPKFNLARKVSGWIRSIFSDSTSRN). A helical transmembrane segment spans residues 38-58 (LFCFLCLNLSFAFVELFYGIW). The Lumenal segment spans residues 59–67 (SNSLGLISD). A helical membrane pass occupies residues 68–88 (SFHMFFDCTALLAGLAASVIS). The Cytoplasmic portion of the chain corresponds to 89–102 (RWKTNEAFSYGYVR). The helical transmembrane segment at 103 to 123 (AEVLAGFVNGLFLIFTAFFIF) threads the bilayer. Residues 124 to 140 (SEGVERALDTPEVHHER) lie on the Lumenal side of the membrane. Residues 141–161 (LLPVSIMGLLVNIIGIFVFQH) traverse the membrane as a helical segment. The interval 161 to 222 (HGGGHGHSHE…GHSHDHSPKH (62 aa)) is his-rich loop. Over 162–246 (GGGHGHSHES…KGSSKQILEG (85 aa)) the chain is Cytoplasmic. A disordered region spans residues 167-239 (HSHESGHGHS…DEPPEEHKGS (73 aa)). The segment covering 228–238 (CHDEPPEEHKG) has biased composition (basic and acidic residues). Residues 247-267 (VFLHIVADTLGSVGVIFSTIL) traverse the membrane as a helical segment. Over 268–272 (MQRYG) the chain is Lumenal. A helical transmembrane segment spans residues 273-293 (LMIADPICSMLIALLIFVSVI). The Cytoplasmic segment spans residues 294-386 (PLLKQSIGIL…LYVQIDFAAI (93 aa)).

It belongs to the cation diffusion facilitator (CDF) transporter (TC 2.A.4) family. SLC30A subfamily. As to quaternary structure, homooligomer.

It is found in the golgi apparatus membrane. The protein localises to the cytoplasmic vesicle. It localises to the golgi apparatus. Its subcellular location is the trans-Golgi network. The protein resides in the sarcoplasmic reticulum. It is found in the mitochondrion. The enzyme catalyses Zn(2+)(in) = Zn(2+)(out). Zinc ion transporter mediating zinc entry from the cytosol into the lumen of organelles along the secretory pathway. By contributing to zinc ion homeostasis within the early secretory pathway, regulates the activation and folding of enzymes like alkaline phosphatases. The polypeptide is Zinc transporter 7-A (slc30a7-a) (Xenopus laevis (African clawed frog)).